The chain runs to 173 residues: Ferritin heavy chain (173 aa).

The region spanning Q6–G155 is the Ferritin-like diiron domain. Fe cation contacts are provided by E23, E58, H61, E103, and Q137.

This sequence belongs to the ferritin family. In terms of assembly, oligomer of 24 subunits. There are two types of subunits: L (light) chain and H (heavy) chain. The functional molecule is roughly spherical and contains a central cavity into which the insoluble mineral iron core is deposited.

The protein resides in the cytoplasm. It catalyses the reaction 4 Fe(2+) + O2 + 4 H(+) = 4 Fe(3+) + 2 H2O. Its function is as follows. Stores iron in a soluble, non-toxic, readily available form. Important for iron homeostasis. Has ferroxidase activity. Iron is taken up in the ferrous form and deposited as ferric hydroxides after oxidation. The chain is Ferritin heavy chain from Echinococcus granulosus (Hydatid tapeworm).